A 160-amino-acid chain; its full sequence is UPF0262 protein Mmar10_1128 (160 aa).

The protein belongs to the UPF0262 family.

This Maricaulis maris (strain MCS10) (Caulobacter maris) protein is UPF0262 protein Mmar10_1128.